The primary structure comprises 398 residues: CCA-adding enzyme (398 aa).

Residues Gly-32 and Arg-35 each contribute to the ATP site. CTP is bound by residues Gly-32 and Arg-35. Positions 45 and 47 each coordinate Mg(2+). Residues Arg-116, Asp-159, Arg-162, Arg-165, and Arg-168 each contribute to the ATP site. Residues Arg-116, Asp-159, Arg-162, Arg-165, and Arg-168 each contribute to the CTP site.

Belongs to the tRNA nucleotidyltransferase/poly(A) polymerase family. Bacterial CCA-adding enzyme type 3 subfamily. As to quaternary structure, homodimer. It depends on Mg(2+) as a cofactor.

It carries out the reaction a tRNA precursor + 2 CTP + ATP = a tRNA with a 3' CCA end + 3 diphosphate. The catalysed reaction is a tRNA with a 3' CCA end + 2 CTP + ATP = a tRNA with a 3' CCACCA end + 3 diphosphate. Functionally, catalyzes the addition and repair of the essential 3'-terminal CCA sequence in tRNAs without using a nucleic acid template. Adds these three nucleotides in the order of C, C, and A to the tRNA nucleotide-73, using CTP and ATP as substrates and producing inorganic pyrophosphate. tRNA 3'-terminal CCA addition is required both for tRNA processing and repair. Also involved in tRNA surveillance by mediating tandem CCA addition to generate a CCACCA at the 3' terminus of unstable tRNAs. While stable tRNAs receive only 3'-terminal CCA, unstable tRNAs are marked with CCACCA and rapidly degraded. In Lacticaseibacillus paracasei (strain ATCC 334 / BCRC 17002 / CCUG 31169 / CIP 107868 / KCTC 3260 / NRRL B-441) (Lactobacillus paracasei), this protein is CCA-adding enzyme.